Reading from the N-terminus, the 511-residue chain is Lysine--tRNA ligase (511 aa).

2 residues coordinate Mg(2+): Glu422 and Glu429.

This sequence belongs to the class-II aminoacyl-tRNA synthetase family. As to quaternary structure, homodimer. Requires Mg(2+) as cofactor.

It is found in the cytoplasm. It carries out the reaction tRNA(Lys) + L-lysine + ATP = L-lysyl-tRNA(Lys) + AMP + diphosphate. The sequence is that of Lysine--tRNA ligase from Chlorobaculum tepidum (strain ATCC 49652 / DSM 12025 / NBRC 103806 / TLS) (Chlorobium tepidum).